Here is a 152-residue protein sequence, read N- to C-terminus: Catabolic 3-dehydroquinase 1 (152 aa).

Residue Tyr-24 is the Proton acceptor of the active site. Residues Asn-75, His-81, and Asp-88 each contribute to the substrate site. The active-site Proton donor is His-101. Substrate-binding positions include 102 to 103 and Arg-112; that span reads VS.

This sequence belongs to the type-II 3-dehydroquinase family. As to quaternary structure, homododecamer. Adopts a ring-like structure, composed of an arrangement of two hexameric rings stacked on top of one another.

It carries out the reaction 3-dehydroquinate = 3-dehydroshikimate + H2O. It functions in the pathway aromatic compound metabolism; 3,4-dihydroxybenzoate biosynthesis; 3,4-dihydroxybenzoate from 3-dehydroquinate: step 1/2. Functionally, is involved in the catabolism of quinate. Allows the utilization of quinate as carbon source via the beta-ketoadipate pathway. The polypeptide is Catabolic 3-dehydroquinase 1 (Aspergillus terreus (strain NIH 2624 / FGSC A1156)).